Consider the following 314-residue polypeptide: Acetylglutamate kinase (314 aa).

Substrate-binding positions include 76-77 (GG), R98, and N199.

It belongs to the acetylglutamate kinase family. ArgB subfamily.

It localises to the cytoplasm. The enzyme catalyses N-acetyl-L-glutamate + ATP = N-acetyl-L-glutamyl 5-phosphate + ADP. Its pathway is amino-acid biosynthesis; L-arginine biosynthesis; N(2)-acetyl-L-ornithine from L-glutamate: step 2/4. Catalyzes the ATP-dependent phosphorylation of N-acetyl-L-glutamate. This chain is Acetylglutamate kinase, found in Bifidobacterium longum (strain DJO10A).